We begin with the raw amino-acid sequence, 108 residues long: Ig kappa chain V-VI region NQ2-6.1 (108 aa).

The interval 1-23 (QILLTQSPAIMSASPGQKVTMTC) is framework-1. A disulfide bond links C23 and C87. Residues 24–33 (SASSSVSYMY) are complementarity-determining-1. The framework-2 stretch occupies residues 34–48 (WYQQKPGSSPRLLIY). The segment at 49–55 (DTSNLAS) is complementarity-determining-2. Residues 56–87 (GVPVRFSGSGSATSYSLTITRMQAEDAATYYC) are framework-3. Residues 88 to 98 (QQWSSYPPMLT) form a complementarity-determining-3 region. Positions 99–108 (FGAGTKLELK) are framework-4.

The chain is Ig kappa chain V-VI region NQ2-6.1 from Mus musculus (Mouse).